The chain runs to 260 residues: Pyridoxine 5'-phosphate synthase (260 aa).

3-amino-2-oxopropyl phosphate-binding residues include Asn-10 and Arg-21. His-46 (proton acceptor) is an active-site residue. The 1-deoxy-D-xylulose 5-phosphate site is built by Arg-48 and His-53. Glu-76 functions as the Proton acceptor in the catalytic mechanism. Thr-113 lines the 1-deoxy-D-xylulose 5-phosphate pocket. His-204 functions as the Proton donor in the catalytic mechanism. 3-amino-2-oxopropyl phosphate is bound by residues Asp-205 and 227-228 (GH).

It belongs to the PNP synthase family. As to quaternary structure, homooctamer; tetramer of dimers.

It localises to the cytoplasm. The enzyme catalyses 3-amino-2-oxopropyl phosphate + 1-deoxy-D-xylulose 5-phosphate = pyridoxine 5'-phosphate + phosphate + 2 H2O + H(+). The protein operates within cofactor biosynthesis; pyridoxine 5'-phosphate biosynthesis; pyridoxine 5'-phosphate from D-erythrose 4-phosphate: step 5/5. Catalyzes the complicated ring closure reaction between the two acyclic compounds 1-deoxy-D-xylulose-5-phosphate (DXP) and 3-amino-2-oxopropyl phosphate (1-amino-acetone-3-phosphate or AAP) to form pyridoxine 5'-phosphate (PNP) and inorganic phosphate. The polypeptide is Pyridoxine 5'-phosphate synthase (Xylella fastidiosa (strain 9a5c)).